A 770-amino-acid chain; its full sequence is Pheromone-regulated membrane protein 10 (770 aa).

2 disordered regions span residues 1–125 (MDGR…DGDD) and 139–169 (NQGG…RNEE). 2 stretches are compositionally biased toward polar residues: residues 49–63 (SGKS…NNDN) and 78–93 (DLSS…SKGT). Residues 155 to 169 (ENGKDDIEKNNRNEE) show a composition bias toward basic and acidic residues. 10 consecutive transmembrane segments (helical) span residues 453 to 473 (WMCV…AFGG), 475 to 495 (WVNL…QFIL), 505 to 525 (VFEI…GSIP), 529 to 549 (ICFG…YIIL), 568 to 588 (FYAI…SALF), 604 to 624 (LISP…ISLL), 629 to 649 (ISQL…TYWA), 659 to 679 (FTAA…SRIW), 681 to 701 (GLAV…GIAS), and 740 to 760 (IQVC…VYPF).

This sequence belongs to the ThrE exporter (TC 2.A.79) family.

The protein resides in the membrane. The sequence is that of Pheromone-regulated membrane protein 10 (PRM10) from Saccharomyces cerevisiae (strain YJM789) (Baker's yeast).